Reading from the N-terminus, the 445-residue chain is Probable aminotransferase TAT3 (445 aa).

Belongs to the class-I pyridoxal-phosphate-dependent aminotransferase family. Pyridoxal 5'-phosphate is required as a cofactor. Expressed in roots, leaves and cauline leaves.

The chain is Probable aminotransferase TAT3 (TAT3) from Arabidopsis thaliana (Mouse-ear cress).